We begin with the raw amino-acid sequence, 355 residues long: UDP-N-acetylglucosamine--N-acetylmuramyl-(pentapeptide) pyrophosphoryl-undecaprenol N-acetylglucosamine transferase (355 aa).

UDP-N-acetyl-alpha-D-glucosamine is bound by residues 13-15 (TGG), asparagine 125, arginine 162, serine 190, isoleucine 244, and glutamine 289.

It belongs to the glycosyltransferase 28 family. MurG subfamily.

It localises to the cell inner membrane. The catalysed reaction is di-trans,octa-cis-undecaprenyl diphospho-N-acetyl-alpha-D-muramoyl-L-alanyl-D-glutamyl-meso-2,6-diaminopimeloyl-D-alanyl-D-alanine + UDP-N-acetyl-alpha-D-glucosamine = di-trans,octa-cis-undecaprenyl diphospho-[N-acetyl-alpha-D-glucosaminyl-(1-&gt;4)]-N-acetyl-alpha-D-muramoyl-L-alanyl-D-glutamyl-meso-2,6-diaminopimeloyl-D-alanyl-D-alanine + UDP + H(+). It functions in the pathway cell wall biogenesis; peptidoglycan biosynthesis. Its function is as follows. Cell wall formation. Catalyzes the transfer of a GlcNAc subunit on undecaprenyl-pyrophosphoryl-MurNAc-pentapeptide (lipid intermediate I) to form undecaprenyl-pyrophosphoryl-MurNAc-(pentapeptide)GlcNAc (lipid intermediate II). The polypeptide is UDP-N-acetylglucosamine--N-acetylmuramyl-(pentapeptide) pyrophosphoryl-undecaprenol N-acetylglucosamine transferase (Neisseria gonorrhoeae (strain ATCC 700825 / FA 1090)).